A 791-amino-acid chain; its full sequence is MDIFSEFLNCLSSDGTLNESSIYKTYQILESLNPKDVDTKENYIKLSNTFSTLGSGVGFQDNLLIEMFKILTVLFFKTRSTDLGDLLIESFTSLEIEKLMRVKKTIGSIVLTKGIQELQEIELPKVGFNCMTYDESIFQGISLERLILQLMSIFIAKCEENKLWLVNNRKDLDLRVIGQRLLHRDFACRFLSGLFISRFSVSGDTDESKHQNGIRLQLFIDFSKFETRLTMQILKADRIFSTCVANTVHAYEGLFSSGSNIDSTIATLVLEPRDLIVYRKGFALLQIPWTSVTTIDKIKKVKSLKIITEVSSLDEFVFQCKDGDKFDELFSTSEEIMNKLLPAIIVSPKLTLRNRSIIQIKEGESKLPNTSKQASQNLPHLDDELAYQRFEDQVIDKSVCDDECTNTENTPSSNIPADVKDSLSADDYAYDTKRKTQIEDLEEDQNKSKIASKDGTNLKEINSVPEFSDENVINQTGPAKKTPVQRRKDGKFAKSTKRKKQKSLKPDTENQESSVKNKKAKSNVNLQYSPKTPICKINDETLKPPTIANIAGHKQMNHLTSENIETPVPVPNGNWYNGVKHETATDIFTTCHDGNNSLKSSVWKELLKEKHWKQESKPQLTGNSRQIDLSTFVKQANTPNITSLLDGTCSSPPNNECFNDKEPDSSSSTLISDRQELEYRNPNAETVKLEEIPYNKFFKTVEKNEAYNPSSKSATIDGLQRYTSMIGNQIYEGILQNEKELRSKLEAYHINCNKVIKEFSKRQTARYKIIEKELAQIEVNLVSQIDSLMFK.

Disordered regions lie at residues 462 to 523 and 644 to 672; these read NSVP…AKSN and LLDGTCSSPPNNECFNDKEPDSSSSTLIS. A Nuclear localization signal motif is present at residues 485–492; that stretch reads QRRKDGKF. The segment covering 493 to 503 has biased composition (basic residues); that stretch reads AKSTKRKKQKS. Positions 644–657 are enriched in polar residues; it reads LLDGTCSSPPNNEC.

As to quaternary structure, component of linear elements (LinEs), which are similar to synaptonemal complexes, at least composed of rec27, rec25, rec10 and mug20. Interacts with rec25; the interaction is direct. Interacts with hop1 (via N-terminus); the interaction is direct. Interacts with rec15 (via C-terminus); the interaction is direct.

Its subcellular location is the nucleus. The protein localises to the chromosome. In terms of biological role, organizes linear element components on chromosomes and is thus required for meiotic DNA recombination. In Schizosaccharomyces pombe (strain 972 / ATCC 24843) (Fission yeast), this protein is Linear element protein rec10.